Consider the following 669-residue polypeptide: DNA mismatch repair protein MutL (669 aa).

Disordered regions lie at residues 354–402 and 448–479; these read NRPA…ENPY and TVSH…PLES. Residues 448–468 are compositionally biased toward polar residues; the sequence is TVSHDSPPNRTAPDATTSSSK.

It belongs to the DNA mismatch repair MutL/HexB family.

Functionally, this protein is involved in the repair of mismatches in DNA. It is required for dam-dependent methyl-directed DNA mismatch repair. May act as a 'molecular matchmaker', a protein that promotes the formation of a stable complex between two or more DNA-binding proteins in an ATP-dependent manner without itself being part of a final effector complex. The polypeptide is DNA mismatch repair protein MutL (Pectobacterium carotovorum subsp. carotovorum (strain PC1)).